An 825-amino-acid polypeptide reads, in one-letter code: E3 ubiquitin-protein ligase ICP0 (825 aa).

The segment covering 1–10 (MEPRPGTSSR) has biased composition (polar residues). The disordered stretch occupies residues 1 to 121 (MEPRPGTSSR…VGEEEAEAGG (121 aa)). The span at 46–57 (DSEEETEVGISD) shows a compositional bias: acidic residues. An RING-type zinc finger spans residues 126-167 (CAVCTDEIAPPLRCQSFPCLHPFCIPCMKTWIPLRNTCPLCN). 3 disordered regions span residues 221 to 312 (RSLS…GGGP), 325 to 683 (PPAA…PAPG), and 803 to 825 (RHPWSREQGAPAPAGDAPAGHGE). Over residues 242 to 251 (TDDEDDDLAD) the composition is skewed to acidic residues. Composition is skewed to low complexity over residues 273 to 283 (TRGTSQPAATR), 290 to 303 (PRSSSSGGAPLRAG), and 350 to 367 (PPARQPRAAQEPPIVISD). Over residues 368-379 (SPPPSPRRPAGP) the composition is skewed to pro residues. 2 stretches are compositionally biased toward low complexity: residues 380 to 394 (GPLSFVSSSSAQVSS) and 402 to 439 (PQSSGRAARPRAAVAPRVRSPPRAAAAPVVSASADAAG). Polar residues predominate over residues 456–468 (RMTQAQTDTQAQS). Positions 479 to 491 (GSGGPGAEGGPGV) are enriched in gly residues. Composition is skewed to low complexity over residues 492–510 (PRGTNTPGAAPHAAEGAAA) and 519–540 (DSGPAASSSASSSAAPRSPLAP). Positions 552-563 (RAPDSDSGDRGH) are enriched in basic and acidic residues. A compositionally biased stretch (low complexity) spans 567 to 641 (APASAGAAPP…GGSVASASGA (75 aa)). Residues 658-667 (GPRKCARKTR) are compositionally biased toward basic residues. Positions 811–825 (GAPAPAGDAPAGHGE) are enriched in low complexity.

Post-translationally, auto-ubiquitinated.

It carries out the reaction S-ubiquitinyl-[E2 ubiquitin-conjugating enzyme]-L-cysteine + [acceptor protein]-L-lysine = [E2 ubiquitin-conjugating enzyme]-L-cysteine + N(6)-ubiquitinyl-[acceptor protein]-L-lysine.. In terms of biological role, evades nuclear antiviral defenses triggered by dsDNA viruses. Acts during the initial stages of lytic infection and the reactivation of latent viral genome. Prevents the antiviral effect of nuclear bodies by degrading host PML and SP100. Prevents antiviral response to viral DNA induced by IFI16 by degrading it. Additionally, inhibits host IRF3 nuclear signaling to prevent interferon production by the infected cells. This chain is E3 ubiquitin-protein ligase ICP0 (RL2), found in Homo sapiens (Human).